The following is a 475-amino-acid chain: Ribulose bisphosphate carboxylase large chain (475 aa).

The propeptide occupies 1-2; the sequence is MS. P3 carries the N-acetylproline modification. Residue K14 is modified to N6,N6,N6-trimethyllysine. Substrate-binding residues include N123 and T173. K175 (proton acceptor) is an active-site residue. K177 is a substrate binding site. Residues K201, D203, and E204 each contribute to the Mg(2+) site. K201 carries the N6-carboxylysine modification. H294 functions as the Proton acceptor in the catalytic mechanism. Residues R295, H327, and S379 each contribute to the substrate site.

Belongs to the RuBisCO large chain family. Type I subfamily. As to quaternary structure, heterohexadecamer of 8 large chains and 8 small chains; disulfide-linked. The disulfide link is formed within the large subunit homodimers. The cofactor is Mg(2+). Post-translationally, the disulfide bond which can form in the large chain dimeric partners within the hexadecamer appears to be associated with oxidative stress and protein turnover.

It is found in the plastid. The protein resides in the chloroplast. It catalyses the reaction 2 (2R)-3-phosphoglycerate + 2 H(+) = D-ribulose 1,5-bisphosphate + CO2 + H2O. It carries out the reaction D-ribulose 1,5-bisphosphate + O2 = 2-phosphoglycolate + (2R)-3-phosphoglycerate + 2 H(+). RuBisCO catalyzes two reactions: the carboxylation of D-ribulose 1,5-bisphosphate, the primary event in carbon dioxide fixation, as well as the oxidative fragmentation of the pentose substrate in the photorespiration process. Both reactions occur simultaneously and in competition at the same active site. The chain is Ribulose bisphosphate carboxylase large chain from Anthoceros angustus (Hornwort).